The sequence spans 127 residues: Large ribosomal subunit protein bL20 (127 aa).

It belongs to the bacterial ribosomal protein bL20 family.

In terms of biological role, binds directly to 23S ribosomal RNA and is necessary for the in vitro assembly process of the 50S ribosomal subunit. It is not involved in the protein synthesizing functions of that subunit. This is Large ribosomal subunit protein bL20 from Akkermansia muciniphila (strain ATCC BAA-835 / DSM 22959 / JCM 33894 / BCRC 81048 / CCUG 64013 / CIP 107961 / Muc).